Here is a 318-residue protein sequence, read N- to C-terminus: Taste receptor type 2 member 60 (318 aa).

Residues 1–7 (MNGDHMV) lie on the Extracellular side of the membrane. The helical transmembrane segment at 8–28 (LGSSVTDKKAIILVTILLLLR) threads the bilayer. Residues 29–40 (LVAIAGNGFIIA) lie on the Cytoplasmic side of the membrane. A helical transmembrane segment spans residues 41–61 (ALGVEWVLRRMLLPCDXLLVS). Over 62–88 (LGASRFCLQSVVMGKTIYVFLHPMAFP) the chain is Extracellular. The helical transmembrane segment at 89-109 (YNPVLQFLAFQWDFLNAATLW) threads the bilayer. The Cytoplasmic segment spans residues 110-128 (FSTWLSVFYCVKIAAFTHP). A helical transmembrane segment spans residues 129–149 (VFLWLKHKLSGWLPWILFSSV). At 150-183 (GLSSFTTILFFIGNHRMYQNYLRNHLQPWNITGN) the chain is on the extracellular side. N-linked (GlcNAc...) asparagine glycosylation is present at Asn-179. A helical membrane pass occupies residues 184 to 204 (SIRSYCEKFYLFPLKMITWTM). Residues 205-234 (PTAVFFICMILLITSLGRHMKKALLTTSGF) lie on the Cytoplasmic side of the membrane. The chain crosses the membrane as a helical span at residues 235–255 (REPSMQAHIKALLALLSFAML). The Extracellular segment spans residues 256 to 264 (FISYFLSLV). The helical transmembrane segment at 265–285 (FSAAGIFPPLDFKFWVWESVI) threads the bilayer. The Cytoplasmic portion of the chain corresponds to 286-318 (YLCAAVHPIILLFSNCRLRAVLKSCRSSRCGTP).

It belongs to the G-protein coupled receptor T2R family.

The protein resides in the membrane. Functionally, receptor that may play a role in the perception of bitterness and is gustducin-linked. May play a role in sensing the chemical composition of the gastrointestinal content. The activity of this receptor may stimulate alpha gustducin, mediate PLC-beta-2 activation and lead to the gating of TRPM5. This chain is Taste receptor type 2 member 60 (TAS2R60), found in Gorilla gorilla gorilla (Western lowland gorilla).